A 74-amino-acid chain; its full sequence is U4-theraphotoxin-Cg1a (74 aa).

The first 19 residues, 1–19 (MNATIFAFLLLLNLAMHNA), serve as a signal peptide directing secretion. A propeptide spanning residues 20–39 (TEQSSETDMDDTLLIPEINR) is cleaved from the precursor. 3 disulfide bridges follow: Cys-42–Cys-56, Cys-49–Cys-61, and Cys-55–Cys-71.

The protein belongs to the neurotoxin 36 family. 01 subfamily. In terms of tissue distribution, expressed by the venom gland.

The protein resides in the secreted. Functionally, probable ion channel inhibitor. In Chilobrachys guangxiensis (Chinese earth tiger tarantula), this protein is U4-theraphotoxin-Cg1a.